A 681-amino-acid polypeptide reads, in one-letter code: Angiomotin-like 2b (681 aa).

Residues 68–84 show a composition bias toward low complexity; it reads GGGAASSSQSSSESLSQ. The disordered stretch occupies residues 68–106; that stretch reads GGGAASSSQSSSESLSQDEPHSPQLSTRQEPQGQEHQVD. The span at 90 to 102 shows a compositional bias: polar residues; the sequence is PQLSTRQEPQGQE. Position 126 is a phosphotyrosine; by FGFR1 (Tyr-126). Coiled coils occupy residues 268–319, 362–441, and 481–508; these read NACS…LMKG, IEKL…LQAT, and VYTL…WEQK. A disordered region spans residues 589–618; sequence QLGALQPATADSSIISSHSTPAHTAQGKER. Residues 597–611 show a composition bias toward polar residues; it reads TADSSIISSHSTPAH. Residues 678–681 carry the PDZ-binding motif; that stretch reads EIFI.

It belongs to the angiomotin family. Interacts with SRC. Post-translationally, phosphorylation at Tyr-126 is necessary for efficient binding to SRC and synergistically functioning with SRC to activate the downstream MAPK pathway. In terms of tissue distribution, expressed in endothelial cells.

The protein localises to the recycling endosome. Its subcellular location is the cytoplasm. It localises to the cell projection. It is found in the podosome. The protein resides in the cell junction. In terms of biological role, required for proper architecture of actin filaments and for cell movements during embryogenesis. Plays a role in the radial actin fiber architecture in skin epithelial cells, thereby maintains cell geometry, size and cell interconnectivity within the skin. Plays an important role in coupling actin fibers to cell junctions in endothelial cells and is therefore required for correct endothelial cell morphology and maintenance of dorsal aorta lumen expansion during embryogenesis. May further play a role in the polarity, proliferation and migration of endothelial cells, and therefore participates in angiogenesis. May regulate the translocation of phosphorylated SRC to peripheral cell-matrix adhesion sites. The polypeptide is Angiomotin-like 2b (Danio rerio (Zebrafish)).